A 162-amino-acid chain; its full sequence is Retinoic acid receptor responder protein 2 (162 aa).

Residues 1–20 form the signal peptide; that stretch reads MKCLLISLALWLGTVGTRGT. 3 cysteine pairs are disulfide-bonded: Cys79-Cys89, Cys100-Cys119, and Cys103-Cys134. The propeptide occupies 157–162; sequence RALRTK.

Secreted in an inactive precursor form, prochemerin, which is proteolytically processed by a variety of extracellular proteases to generate forms with differing levels of bioactivity. For example, the removal of six amino acids results in chemerin-156, which exhibits the highest activity, while removal of seven amino acids results in chemerin-155 which has slightly less activity. Some proteases are able to cleave at more than one site and chemerin forms may be sequentially processed by different enzymes to modulate activity levels. The coordinated expression and activity of chemerin-modifying enzymes is essential for regulating its bioactivation, inactivation and, consequently, biological function. Cathepsin G cleaves seven C-terminal amino acids from prochemerin (chemerin-155), elastase is able to cleave six (chemerin-156), eight (chemerin-154) or eleven (chemerin-151), plasmin cleaves five amino acids (chemerin-157), and tryptase cleaves five (chemerin-157) or eight (chemerin-154). Multiple cleavages might be required to fully activate chemerin, with an initial tryptase cleavage resulting in chemerin with low activity (chemerin-157), and a second cleavage by carboxypeptidase N or B producing highly active chemerin (chemerin-156). In terms of tissue distribution, expressed in the differentiated adipocytes (at protein level). Abundantly expressed in the liver, adipose tissue including visceral, epididymal, and brown adipose tissue.

The protein localises to the secreted. Adipocyte-secreted protein (adipokine) that regulates adipogenesis, metabolism and inflammation through activation of the chemokine-like receptor 1 (CMKLR1). Also acts as a ligand for CMKLR2. Can also bind to C-C chemokine receptor-like 2 (CCRL2), but with a lower affinity than it does to CMKLR1 or CMKLR2. Positively regulates adipocyte differentiation, modulates the expression of adipocyte genes involved in lipid and glucose metabolism and might play a role in angiogenesis, a process essential for the expansion of white adipose tissue. Also acts as a pro-inflammatory adipokine, causing an increase in secretion of pro-inflammatory and prodiabetic adipokines, which further impair adipose tissue metabolic function and have negative systemic effects including impaired insulin sensitivity, altered glucose and lipid metabolism, and a decrease in vascular function in other tissues. Can have both pro- and anti-inflammatory properties depending on the modality of enzymatic cleavage by different classes of proteases. Acts as a chemotactic factor for leukocyte populations expressing CMKLR1, particularly immature plasmacytoid dendritic cells, but also immature myeloid DCs, macrophages and natural killer cells. Exerts an anti-inflammatory role by preventing TNF/TNFA-induced VCAM1 expression and monocytes adhesion in vascular endothelial cells. The effect is mediated via inhibiting activation of NF-kappa-B and CRK/p38 through stimulation of AKT1/NOS3 signaling and nitric oxide production. Exhibits an antimicrobial function in the skin. The chain is Retinoic acid receptor responder protein 2 (Rarres2) from Mus musculus (Mouse).